We begin with the raw amino-acid sequence, 1508 residues long: ABC-type transporter oblD (1508 aa).

2 disordered regions span residues 1 to 35 (MSLGPGGFEATPNSVMPSDASLHNQSHHTDSLTNN) and 54 to 82 (KYTQNSVYSTTSQNPFAAEPGSKLDPNGG). Over residues 11–24 (TPNSVMPSDASLHN) the composition is skewed to polar residues. Asn-24 and Asn-35 each carry an N-linked (GlcNAc...) asparagine glycan. The segment covering 55–68 (YTQNSVYSTTSQNP) has biased composition (polar residues). Asn-83, Asn-231, and Asn-314 each carry an N-linked (GlcNAc...) asparagine glycan. An ABC transporter 1 domain is found at 136–390 (LEAVGLVRKL…FLNMGFVCPD (255 aa)). Transmembrane regions (helical) follow at residues 501 to 521 (ITISSAMGNAIIALIISSMFF), 536 to 556 (LLFFAIVINAFSSGLEMLTLY), 610 to 630 (GNFFFFVFTSFVLTLTMSMFF), 643 to 663 (ALPFAAILITGLTMYTGFTIP), and 752 to 772 (GIIFAFMVILCAIYLVASDFI). The 243-residue stretch at 828-1070 (FQWKDICYDI…ILIDYFTRNG (243 aa)) folds into the ABC transporter 2 domain. An ATP-binding site is contributed by 864–871 (GVSGAGKT). 4 helical membrane-spanning segments follow: residues 1172 to 1192 (YIYSKAFLCVSTSLYVGFSLY), 1206 to 1226 (FAIFTLFFLFGQFIQQIMPHF), 1296 to 1316 (LFVWVFLMFASTFAHFMIAAL), and 1322 to 1342 (AGNMGNLLFTLCVIFCGILTT). An N-linked (GlcNAc...) asparagine glycan is attached at Asn-1390. The helical transmembrane segment at 1443–1463 (FGLMWVFVVFNAFAACGLYYW) threads the bilayer.

Belongs to the ABC transporter superfamily. ABCG family. PDR (TC 3.A.1.205) subfamily.

Its subcellular location is the cell membrane. In terms of biological role, ABC-type transporter; part of the gene cluster that mediates the biosynthesis of the sesterterpenes ophiobolins, fungal phytotoxins with potential anti-cancer activities. Acts as a specific transporter involved in ophiobolins secretion. This chain is ABC-type transporter oblD, found in Cochliobolus heterostrophus (strain C5 / ATCC 48332 / race O) (Southern corn leaf blight fungus).